A 418-amino-acid polypeptide reads, in one-letter code: Voltage-gated ClC-type chloride channel ClcB (418 aa).

A topological domain (cytoplasmic) is located at residue methionine 1. Residues phenylalanine 2–phenylalanine 22 form a helical membrane-spanning segment. The Periplasmic segment spans residues arginine 23–arginine 53. The chain crosses the membrane as a helical span at residues leucine 54–phenylalanine 74. The Cytoplasmic segment spans residues threonine 75–lysine 145. A helical transmembrane segment spans residues leucine 146–glycine 166. The Periplasmic segment spans residues serine 167–threonine 177. A helical membrane pass occupies residues methionine 178–isoleucine 200. Residues asparagine 201 to tyrosine 221 are Cytoplasmic-facing. A helical membrane pass occupies residues alanine 222–methionine 242. At asparagine 243–proline 257 the chain is on the periplasmic side. The helical transmembrane segment at tryptophan 258 to tryptophan 278 threads the bilayer. The Cytoplasmic portion of the chain corresponds to glycine 279 to threonine 290. A helical transmembrane segment spans residues alanine 291 to alanine 311. The Periplasmic portion of the chain corresponds to serine 312 to serine 315. Residues glycine 316–tyrosine 336 traverse the membrane as a helical segment. Over glycine 337–threonine 351 the chain is Cytoplasmic. A helical membrane pass occupies residues leucine 352 to methionine 372. Over serine 373–glutamate 379 the chain is Periplasmic. Residues methionine 380–isoleucine 400 traverse the membrane as a helical segment. At serine 401 to serine 418 the chain is on the cytoplasmic side.

The protein belongs to the chloride channel (TC 2.A.49) family. ClcB subfamily.

The protein localises to the cell inner membrane. Functionally, probably acts as an electrical shunt for an outwardly-directed proton pump that is linked to amino acid decarboxylation, as part of the extreme acid resistance (XAR) response. This chain is Voltage-gated ClC-type chloride channel ClcB (clcB), found in Escherichia coli (strain K12).